We begin with the raw amino-acid sequence, 221 residues long: HP1-HOAP-interacting protein (221 aa).

The tract at residues 69 to 113 is disordered; that stretch reads NAKRHKMARETAASITDVSGSQSSSHQSAPSLHVSGQSSEFGASY. Positions 86-103 are enriched in low complexity; it reads VSGSQSSSHQSAPSLHVS.

In terms of assembly, component of the HipHop-HOAP telomere-capping complex, composed of at least HipHop and cav/HOAP, and may include Su(var)205/HP1; HipHop and cav/HOAP, but not Su(var)205, are interdependent for their protein stability. Interacts (via N-terminus) with cav/HOAP and Su(var)205/HP1. The HipHop-HOAP complex recruits the MTV complex, consisting of moi/modigliani, tea and ver/verrocchio, to telomeres to form the terminin telomere-capping complex.

The protein localises to the nucleus. The protein resides in the chromosome. Its subcellular location is the telomere. Its function is as follows. Part of the HipHop-HOAP complex that recruits the MTV complex to form the terminin telomere-capping complex, which binds to chromosome ends in a sequence-independent manner and prevents telomere fusion. This Drosophila melanogaster (Fruit fly) protein is HP1-HOAP-interacting protein.